Consider the following 314-residue polypeptide: MIRIGTRGSLLATTQAATVRDALIANGHAAELVTISTLGDRSSAPIETLGVGVFTTALREAIEDGRVDAAVHSHKDLPTAQDPRFTIAAIPPRQDPRDAVVARDGLVLGELPVGSLVGTSSPRRAAQLRALGLGLEIRPLRGNLDTRLNRVSNGDLDAIVVARAGLARLGRLDDVTETLEPVQMLPAPAQGALAIECRAGDSRLATVLAELDDADTRAAVTAERALLAELEAGCSAPVGAIAEVVESIDEEGRVFEELSLRGCVAALDGSDVIRASGIGTSGRARELGLAVAAELFELGARELMWGEGNSPQGS.

C234 carries the S-(dipyrrolylmethanemethyl)cysteine modification.

Belongs to the HMBS family. As to quaternary structure, monomer. Dipyrromethane serves as cofactor.

It carries out the reaction 4 porphobilinogen + H2O = hydroxymethylbilane + 4 NH4(+). It functions in the pathway porphyrin-containing compound metabolism; protoporphyrin-IX biosynthesis; coproporphyrinogen-III from 5-aminolevulinate: step 2/4. Its function is as follows. Tetrapolymerization of the monopyrrole PBG into the hydroxymethylbilane pre-uroporphyrinogen in several discrete steps. This is Porphobilinogen deaminase from Mycobacterium marinum (strain ATCC BAA-535 / M).